The primary structure comprises 178 residues: MLTKERKKSLIDSFIYALESSPVILFVDFSGMSVLESNDFRLELYKNFGKDVVFTVYRTSLLKTAVKLANKELEDFEKFFEGSTGVIYAEESDPVDVLKAVKKFSESHNNKPFIKGGVLEGKIFDAAKAEEYAKLPSKQELYATVVRSLNSPISGLVNALSGNLRKVVYVINAIKEKK.

The protein belongs to the universal ribosomal protein uL10 family. In terms of assembly, part of the ribosomal stalk of the 50S ribosomal subunit. The N-terminus interacts with L11 and the large rRNA to form the base of the stalk. The C-terminus forms an elongated spine to which L12 dimers bind in a sequential fashion forming a multimeric L10(L12)X complex.

Its function is as follows. Forms part of the ribosomal stalk, playing a central role in the interaction of the ribosome with GTP-bound translation factors. This is Large ribosomal subunit protein uL10 from Petrotoga mobilis (strain DSM 10674 / SJ95).